Reading from the N-terminus, the 513-residue chain is L-arabinose transport ATP-binding protein AraG (513 aa).

ABC transporter domains lie at 6-243 (LEMR…GMVG) and 264-508 (VKNW…TKTA). Residue 38-45 (GENGAGKS) participates in ATP binding.

This sequence belongs to the ABC transporter superfamily.

Its subcellular location is the cell membrane. The enzyme catalyses L-arabinose(out) + ATP + H2O = L-arabinose(in) + ADP + phosphate + H(+). Part of the binding-protein-dependent transport system for L-arabinose. Probably responsible for energy coupling to the transport system. The sequence is that of L-arabinose transport ATP-binding protein AraG (araG) from Geobacillus stearothermophilus (Bacillus stearothermophilus).